Reading from the N-terminus, the 142-residue chain is Thioredoxin-like protein 4A (142 aa).

An intrachain disulfide couples C38 to C79. Position 132 is a phosphoserine (S132).

This sequence belongs to the DIM1 family. Component of the precatalytic spliceosome (spliceosome B complex). Component of the U5 snRNP complex. Component of the U4/U6-U5 tri-snRNP complex. The U4/U6-U5 tri-snRNP complex is a building block of the precatalytic spliceosome (spliceosome B complex). The U4/U6-U5 tri-snRNP complex is composed of the U4, U6 and U5 snRNAs and at least PRPF3, PRPF4, PRPF6, PRPF8, PRPF31, SNRNP200, TXNL4A, SNRNP40, SNRPB, SNRPD1, SNRPD2, SNRPD3, SNRPE, SNRPF, SNRPG, DDX23, CD2BP2, PPIH, SNU13, EFTUD2, SART1 and USP39, plus LSM2, LSM3, LSM4, LSM5, LSM6, LSM7 and LSM8. Directly interacts with CD2BP2. Interacts with HNRPF, HNRPH2, NEDD9 and PQBP1. Interacts with ERBB4. In terms of processing, the disulfide bond seen in structures determined by X-ray crystallography and NMR is not essential for protein folding and function.

It localises to the nucleus. Plays a role in pre-mRNA splicing as component of the U5 snRNP and U4/U6-U5 tri-snRNP complexes that are involved in spliceosome assembly, and as component of the precatalytic spliceosome (spliceosome B complex). The protein is Thioredoxin-like protein 4A (TXNL4A) of Homo sapiens (Human).